The sequence spans 252 residues: Imidazole glycerol phosphate synthase subunit HisF (252 aa).

Active-site residues include aspartate 11 and aspartate 130.

It belongs to the HisA/HisF family. As to quaternary structure, heterodimer of HisH and HisF.

The protein localises to the cytoplasm. The catalysed reaction is 5-[(5-phospho-1-deoxy-D-ribulos-1-ylimino)methylamino]-1-(5-phospho-beta-D-ribosyl)imidazole-4-carboxamide + L-glutamine = D-erythro-1-(imidazol-4-yl)glycerol 3-phosphate + 5-amino-1-(5-phospho-beta-D-ribosyl)imidazole-4-carboxamide + L-glutamate + H(+). It functions in the pathway amino-acid biosynthesis; L-histidine biosynthesis; L-histidine from 5-phospho-alpha-D-ribose 1-diphosphate: step 5/9. Functionally, IGPS catalyzes the conversion of PRFAR and glutamine to IGP, AICAR and glutamate. The HisF subunit catalyzes the cyclization activity that produces IGP and AICAR from PRFAR using the ammonia provided by the HisH subunit. This Bacillus licheniformis (strain ATCC 14580 / DSM 13 / JCM 2505 / CCUG 7422 / NBRC 12200 / NCIMB 9375 / NCTC 10341 / NRRL NRS-1264 / Gibson 46) protein is Imidazole glycerol phosphate synthase subunit HisF.